Consider the following 314-residue polypeptide: Hydroxyacyl-coenzyme A dehydrogenase, mitochondrial (314 aa).

The N-terminal 12 residues, 1–12 (MAFVTRQFLRSM), are a transit peptide targeting the mitochondrion. NAD(+) contacts are provided by residues 34–39 (GGGLMG) and Asp-57. Position 73 (Ser-73) interacts with CoA. Lys-75 carries the N6-acetyllysine modification. Residue Lys-80 coordinates CoA. N6-succinyllysine is present on Lys-80. N6-acetyllysine; alternate is present on residues Lys-81 and Lys-87. An N6-succinyllysine; alternate mark is found at Lys-81 and Lys-87. Glu-122 lines the NAD(+) pocket. N6-acetyllysine is present on Lys-125. An NAD(+)-binding site is contributed by Lys-127. An N6-(2-hydroxyisobutyryl)lysine modification is found at Lys-127. Position 136 is an N6-acetyllysine; alternate (Lys-136). Residue Lys-136 is modified to N6-succinyllysine; alternate. Residues Ser-149 and Asn-173 each coordinate NAD(+). CoA is bound at residue Ser-149. Lys-179 carries the post-translational modification N6-acetyllysine. N6-acetyllysine; alternate is present on residues Lys-185, Lys-192, and Lys-202. 3 positions are modified to N6-succinyllysine; alternate: Lys-185, Lys-192, and Lys-202. An N6-succinyllysine modification is found at Lys-206. Lys-212 and Lys-241 each carry N6-acetyllysine; alternate. An N6-succinyllysine; alternate mark is found at Lys-212 and Lys-241. Residue Lys-305 coordinates NAD(+). Lys-312 carries the post-translational modification N6-acetyllysine; alternate. Residue Lys-312 is modified to N6-succinyllysine; alternate.

Belongs to the 3-hydroxyacyl-CoA dehydrogenase family. Homodimer. Interacts with GLUD1; this interaction inhibits the activation of glutamate dehydrogenase 1 (GLUD1). Post-translationally, succinylation at Lys-81, adjacent to a coenzyme A binding site. Desuccinylated by SIRT5. Expressed in liver, kidney, brain, and pancreatic islets.

It is found in the mitochondrion matrix. Its subcellular location is the nucleus. It localises to the cytoplasm. The protein resides in the cytosol. It carries out the reaction a (3S)-3-hydroxyacyl-CoA + NAD(+) = a 3-oxoacyl-CoA + NADH + H(+). It catalyses the reaction (3S)-3-hydroxybutanoyl-CoA + NAD(+) = acetoacetyl-CoA + NADH + H(+). The enzyme catalyses (3S)-hydroxydecanoyl-CoA + NAD(+) = 3-oxodecanoyl-CoA + NADH + H(+). The catalysed reaction is (3S)-hydroxyhexadecanoyl-CoA + NAD(+) = 3-oxohexadecanoyl-CoA + NADH + H(+). Its pathway is lipid metabolism; fatty acid beta-oxidation. Functionally, mitochondrial fatty acid beta-oxidation enzyme that catalyzes the third step of the beta-oxidation cycle for medium and short-chain 3-hydroxy fatty acyl-CoAs (C4 to C10). Plays a role in the control of insulin secretion by inhibiting the activation of glutamate dehydrogenase 1 (GLUD1), an enzyme that has an important role in regulating amino acid-induced insulin secretion. Plays a role in the maintenance of normal spermatogenesis through the reduction of fatty acid accumulation in the testes. Inhibits cell proliferation. The polypeptide is Hydroxyacyl-coenzyme A dehydrogenase, mitochondrial (Hadh) (Mus musculus (Mouse)).